Reading from the N-terminus, the 422-residue chain is Mannose-1-phosphate guanylyltransferase regulatory subunit alpha-B (422 aa).

Positions 2 to 253 (LKAIILIGGP…QHFWSQIKSA (252 aa)) are substrate-binding domain. Residues E85 and Q249 each contribute to the GDP-alpha-D-mannose site. The interval 275–422 (LATNQGGTPK…NRSFKNQIIL (148 aa)) is hexapeptide repeat domain. The tract at residues 358–386 (TPSDPNPNDPYAKIDSETLFRDGGLTPSI) is C-loop.

It belongs to the transferase hexapeptide repeat family. Component of the GMPPA-GMPPB mannose-1-phosphate guanylyltransferase complex composed of 4 GMPPA subunits and 8 GMPPB subunits; the complex is organized into three layers, a central layer made up of 2 GMPPA dimers sandwiched between two layers each made up of 2 GMPPB dimers.

It participates in nucleotide-sugar biosynthesis; GDP-alpha-D-mannose biosynthesis; GDP-alpha-D-mannose from alpha-D-mannose 1-phosphate (GTP route): step 1/1. Functionally, regulatory subunit of the GMPPA-GMPPB mannose-1-phosphate guanylyltransferase complex; reduces the catalytic activity of GMPPB when part of the complex. Mediates allosteric feedback inhibition of GMPPB catalytic activity upon binding GDP-alpha-D-mannose. Together with GMPPB regulates GDP-alpha-D-mannose levels. One of two paralogs (gmppaa and gmppab) that may have redundant functions. This is Mannose-1-phosphate guanylyltransferase regulatory subunit alpha-B (gmppab) from Danio rerio (Zebrafish).